Consider the following 812-residue polypeptide: DNA replication licensing factor MCM3 (812 aa).

At Ala-2 the chain carries N-acetylalanine. Phosphoserine is present on Ser-160. Lys-293 is subject to N6-acetyllysine. An MCM domain is found at 295–502 (VFEQLARSLA…QDREISDHVL (208 aa)). Residues Gln-353, Leu-393, Glu-394, Ala-395, and Ala-397 each contribute to the ADP site. The Arginine finger motif lies at 477–480 (SRFD). N6-acetyllysine is present on Lys-547. Ser-611 carries the phosphoserine modification. An ATP-binding site is contributed by Arg-664. Residues 664–744 (RKKASEDESD…TQDSQKVELS (81 aa)) are disordered. Residues Ser-668, Ser-672, and Ser-681 each carry the phosphoserine modification. The span at 670-681 (DESDLEDEEEKS) shows a compositional bias: acidic residues. Tyr-705 carries the post-translational modification Phosphotyrosine. Ser-708 is modified (phosphoserine). Phosphothreonine occurs at positions 719, 722, and 729. Residues 720 to 744 (PKTDDSQEKTDDSQETQDSQKVELS) show a composition bias toward basic and acidic residues. Residues Ser-732 and Ser-738 each carry the phosphoserine modification.

It belongs to the MCM family. As to quaternary structure, component of the MCM2-7 complex. The complex forms a toroidal hexameric ring with the proposed subunit order MCM2-MCM6-MCM4-MCM7-MCM3-MCM5. Component of the CMG helicase complex, a hexameric ring of related MCM2-7 subunits stabilized by CDC45 and the tetrameric GINS complex. Associated with the replication-specific DNA polymerase alpha. Interacts with MCMBP. Interacts with ANKRD17. Interacts with MCM3AP; this interaction leads to MCM3 acetylation. In terms of processing, acetylated by MCM3AP. O-glycosylated (O-GlcNAcylated), in a cell cycle-dependent manner.

The protein localises to the nucleus. It localises to the chromosome. The enzyme catalyses ATP + H2O = ADP + phosphate + H(+). Its function is as follows. Acts as a component of the MCM2-7 complex (MCM complex) which is the replicative helicase essential for 'once per cell cycle' DNA replication initiation and elongation in eukaryotic cells. Core component of CDC45-MCM-GINS (CMG) helicase, the molecular machine that unwinds template DNA during replication, and around which the replisome is built. The active ATPase sites in the MCM2-7 ring are formed through the interaction surfaces of two neighboring subunits such that a critical structure of a conserved arginine finger motif is provided in trans relative to the ATP-binding site of the Walker A box of the adjacent subunit. The six ATPase active sites, however, are likely to contribute differentially to the complex helicase activity. Required for the entry in S phase and for cell division. This chain is DNA replication licensing factor MCM3 (Mcm3), found in Mus musculus (Mouse).